Here is a 450-residue protein sequence, read N- to C-terminus: Phosphoglucosamine mutase (450 aa).

Catalysis depends on S102, which acts as the Phosphoserine intermediate. S102, D243, D245, and D247 together coordinate Mg(2+). S102 carries the post-translational modification Phosphoserine.

It belongs to the phosphohexose mutase family. Requires Mg(2+) as cofactor. Activated by phosphorylation.

It catalyses the reaction alpha-D-glucosamine 1-phosphate = D-glucosamine 6-phosphate. In terms of biological role, catalyzes the conversion of glucosamine-6-phosphate to glucosamine-1-phosphate. The polypeptide is Phosphoglucosamine mutase (Rhizobium johnstonii (strain DSM 114642 / LMG 32736 / 3841) (Rhizobium leguminosarum bv. viciae)).